We begin with the raw amino-acid sequence, 126 residues long: Fluoride-specific ion channel FluC (126 aa).

A run of 4 helical transmembrane segments spans residues 6–26, 36–56, 68–88, and 99–119; these read FVAV…FAVL, YGTL…VGFF, LLAV…SSEV, and IGML…MLGL. Na(+) is bound by residues Gly-76 and Thr-79.

It belongs to the fluoride channel Fluc/FEX (TC 1.A.43) family.

The protein resides in the cell inner membrane. The catalysed reaction is fluoride(in) = fluoride(out). With respect to regulation, na(+) is not transported, but it plays an essential structural role and its presence is essential for fluoride channel function. Fluoride-specific ion channel. Important for reducing fluoride concentration in the cell, thus reducing its toxicity. The polypeptide is Fluoride-specific ion channel FluC (Ralstonia nicotianae (strain ATCC BAA-1114 / GMI1000) (Ralstonia solanacearum)).